The following is a 494-amino-acid chain: Acetyl-coenzyme A carboxylase carboxyl transferase subunit beta, chloroplastic (494 aa).

One can recognise a CoA carboxyltransferase N-terminal domain in the interval 226-494 (LWVQCENCYG…VPLNQNETEH (269 aa)). Zn(2+) is bound by residues Cys230, Cys233, Cys249, and Cys252. The segment at 230–252 (CENCYGLNYKKFLKSKMNICEQC) adopts a C4-type zinc-finger fold.

It belongs to the AccD/PCCB family. Acetyl-CoA carboxylase is a heterohexamer composed of biotin carboxyl carrier protein, biotin carboxylase and 2 subunits each of ACCase subunit alpha and ACCase plastid-coded subunit beta (accD). Zn(2+) serves as cofactor.

The protein resides in the plastid. It localises to the chloroplast stroma. The catalysed reaction is N(6)-carboxybiotinyl-L-lysyl-[protein] + acetyl-CoA = N(6)-biotinyl-L-lysyl-[protein] + malonyl-CoA. Its pathway is lipid metabolism; malonyl-CoA biosynthesis; malonyl-CoA from acetyl-CoA: step 1/1. Component of the acetyl coenzyme A carboxylase (ACC) complex. Biotin carboxylase (BC) catalyzes the carboxylation of biotin on its carrier protein (BCCP) and then the CO(2) group is transferred by the transcarboxylase to acetyl-CoA to form malonyl-CoA. The polypeptide is Acetyl-coenzyme A carboxylase carboxyl transferase subunit beta, chloroplastic (Coffea arabica (Arabian coffee)).